Consider the following 176-residue polypeptide: Probable Brix domain-containing ribosomal biogenesis protein (176 aa).

The region spanning 6–176 (IEIVFTSSRD…QLYDRNKNIN (171 aa)) is the Brix domain.

Probably involved in the biogenesis of the ribosome. This chain is Probable Brix domain-containing ribosomal biogenesis protein, found in Sulfurisphaera tokodaii (strain DSM 16993 / JCM 10545 / NBRC 100140 / 7) (Sulfolobus tokodaii).